We begin with the raw amino-acid sequence, 296 residues long: Protein-export membrane protein SecF (296 aa).

The next 6 helical transmembrane spans lie at 23–43 (MIIYPLIVFGIAIIIIIANYV), 144–164 (AIVYAFIGMAIVVFLFFRVPV), 169–189 (VVFSAFSDMIIAIALMNIFGI), 194–214 (ATIAALLMLIGYSVDSNILLT), 236–256 (GFTMSTTTLGALASLWIFSTA), and 265–285 (VLIFGLLADFMNTWILNAGVL).

Belongs to the SecD/SecF family. SecF subfamily. Part of the protein translocation apparatus. Forms a complex with SecD.

It localises to the cell membrane. Its function is as follows. Involved in protein export. The polypeptide is Protein-export membrane protein SecF (Pyrococcus furiosus (strain ATCC 43587 / DSM 3638 / JCM 8422 / Vc1)).